The chain runs to 319 residues: Acyl-coenzyme A thioesterase 8 (319 aa).

Residues 1–20 form a disordered region; the sequence is MSSPQAPEDGQGCGDRGDPP. Residues Asp232, Ser254, and Gln304 each act as charge relay system in the active site. A Microbody targeting signal motif is present at residues 317–319; that stretch reads SKL.

Belongs to the C/M/P thioester hydrolase family. As to quaternary structure, homodimer. (Microbial infection) Interacts with human immunodeficiency virus (HIV-1) Nef (via middle region); this interaction enhances ACOT8 Acyl-CoA thioesterase activity and occurs in a Nef myristoylation-independent manner. According to a second report, the interaction with HIV-1 Nef occurs in a Nef myristoylation-independent manner but does not enhance ACOT8 Acyl-CoA thioesterase activity. In terms of tissue distribution, detected in a T-cell line (at protein level). Ubiquitous.

It is found in the peroxisome matrix. It catalyses the reaction choloyl-CoA + H2O = cholate + CoA + H(+). It carries out the reaction chenodeoxycholoyl-CoA + H2O = chenodeoxycholate + CoA + H(+). The catalysed reaction is acetyl-CoA + H2O = acetate + CoA + H(+). The enzyme catalyses butanoyl-CoA + H2O = butanoate + CoA + H(+). It catalyses the reaction 2-methylpropanoyl-CoA + H2O = 2-methylpropanoate + CoA + H(+). It carries out the reaction hexanoyl-CoA + H2O = hexanoate + CoA + H(+). The catalysed reaction is octanoyl-CoA + H2O = octanoate + CoA + H(+). The enzyme catalyses decanoyl-CoA + H2O = decanoate + CoA + H(+). It catalyses the reaction dodecanoyl-CoA + H2O = dodecanoate + CoA + H(+). It carries out the reaction tetradecanoyl-CoA + H2O = tetradecanoate + CoA + H(+). The catalysed reaction is hexadecanoyl-CoA + H2O = hexadecanoate + CoA + H(+). The enzyme catalyses octadecanoyl-CoA + H2O = octadecanoate + CoA + H(+). It catalyses the reaction malonyl-CoA + H2O = malonate + CoA + H(+). It carries out the reaction acetoacetyl-CoA + H2O = acetoacetate + CoA + H(+). The catalysed reaction is propanoyl-CoA + H2O = propanoate + CoA + H(+). The enzyme catalyses succinyl-CoA + H2O = succinate + CoA + H(+). It catalyses the reaction glutaryl-CoA + H2O = glutarate + CoA + H(+). It carries out the reaction hexanedioyl-CoA + H2O = hexanedioate + CoA + H(+). The catalysed reaction is octanedioyl-CoA + H2O = octanedioate + CoA + H(+). The enzyme catalyses decanedioyl-CoA + H2O = decanedioate + CoA + H(+). It catalyses the reaction dodecanedioyl-CoA + H2O = dodecanedioate + CoA + H(+). It carries out the reaction (9Z)-tetradecenoyl-CoA + H2O = (9Z)-tetradecenoate + CoA + H(+). The catalysed reaction is (9Z)-hexadecenoyl-CoA + H2O = (9Z)-hexadecenoate + CoA + H(+). The enzyme catalyses (9Z)-octadecenoyl-CoA + H2O = (9Z)-octadecenoate + CoA + H(+). It catalyses the reaction (9Z,12Z)-octadecadienoyl-CoA + H2O = (9Z,12Z)-octadecadienoate + CoA + H(+). It carries out the reaction eicosanoyl-CoA + H2O = eicosanoate + CoA + H(+). The catalysed reaction is (5Z,8Z,11Z,14Z)-eicosatetraenoyl-CoA + H2O = (5Z,8Z,11Z,14Z)-eicosatetraenoate + CoA + H(+). The enzyme catalyses 4,8-dimethylnonanoyl-CoA + H2O = 4,8-dimethylnonanoate + CoA + H(+). It catalyses the reaction 2,6-dimethylheptanoyl-CoA + H2O = 2,6-dimethylheptanoate + CoA + H(+). It carries out the reaction (3S)-3-hydroxy-3-methylglutaryl-CoA + H2O = 3-hydroxy-3-methylglutarate + CoA + H(+). The catalysed reaction is 3alpha,7alpha,12alpha-trihydroxy-5beta-cholestan-26-oyl-CoA + H2O = 3alpha,7alpha,12alpha-trihydroxy-5beta-cholestan-26-oate + CoA + H(+). The enzyme catalyses 2-methyloctadecanoyl-CoA + H2O = 2-methyloctadecanoate + CoA + H(+). It catalyses the reaction prostaglandin F2alpha-CoA + H2O = prostaglandin F2alpha + CoA + H(+). Its pathway is lipid metabolism; fatty acid metabolism. Its activity is regulated as follows. Inhibited by CoASH (IC(50)=10-15 uM). Also inhibited by cysteine-reactive agents. Its function is as follows. Catalyzes the hydrolysis of acyl-CoAs into free fatty acids and coenzyme A (CoASH), regulating their respective intracellular levels. Displays no strong substrate specificity with respect to the carboxylic acid moiety of Acyl-CoAs. Hydrolyzes medium length (C2 to C20) straight-chain, saturated and unsaturated acyl-CoAS but is inactive towards substrates with longer aliphatic chains. Moreover, it catalyzes the hydrolysis of CoA esters of bile acids, such as choloyl-CoA and chenodeoxycholoyl-CoA and competes with bile acid CoA:amino acid N-acyltransferase (BAAT). Is also able to hydrolyze CoA esters of dicarboxylic acids. It is involved in the metabolic regulation of peroxisome proliferation. (Microbial infection) May mediate Nef-induced down-regulation of CD4 cell-surface expression. The polypeptide is Acyl-coenzyme A thioesterase 8 (ACOT8) (Homo sapiens (Human)).